A 614-amino-acid chain; its full sequence is Putative ABC transporter ATP-binding protein MA_1747 (614 aa).

ABC transporter domains lie at 11–251 (VRLE…KLGI) and 319–552 (VLIE…AGLL). ATP-binding positions include 45–52 (GPSGCGKS) and 352–359 (GHNGAGKT).

The protein belongs to the ABC transporter superfamily.

Its subcellular location is the cell membrane. Functionally, probably part of an ABC transporter complex. Responsible for energy coupling to the transport system. This chain is Putative ABC transporter ATP-binding protein MA_1747, found in Methanosarcina acetivorans (strain ATCC 35395 / DSM 2834 / JCM 12185 / C2A).